The primary structure comprises 215 residues: Variable small protein 2 (215 aa).

The first 18 residues, 1-18, serve as a signal peptide directing secretion; sequence MRKRISAIIMTLFMVFMS. Cys-19 is lipidated: N-palmitoyl cysteine. Cys-19 carries the S-diacylglycerol cysteine lipid modification.

It belongs to the variable small protein (Vsp) family.

The protein resides in the cell outer membrane. In terms of biological role, the Vlp and Vsp proteins are antigenically distinct proteins, only one vlp or vsp gene is transcriptionally active at any one time. Switching between these genes is a mechanism of host immune response evasion. The protein is Variable small protein 2 of Borrelia hermsii.